The primary structure comprises 506 residues: Glutamate--tRNA ligase (506 aa).

The 'HIGH' region signature appears at 23 to 33 (PSPTGTPHVGL). Positions 267-271 (KLSKR) match the 'KMSKS' region motif. An ATP-binding site is contributed by K270.

This sequence belongs to the class-I aminoacyl-tRNA synthetase family. Glutamate--tRNA ligase type 1 subfamily. In terms of assembly, monomer.

It localises to the cytoplasm. It carries out the reaction tRNA(Glu) + L-glutamate + ATP = L-glutamyl-tRNA(Glu) + AMP + diphosphate. Catalyzes the attachment of glutamate to tRNA(Glu) in a two-step reaction: glutamate is first activated by ATP to form Glu-AMP and then transferred to the acceptor end of tRNA(Glu). The sequence is that of Glutamate--tRNA ligase from Clavibacter sepedonicus (Clavibacter michiganensis subsp. sepedonicus).